The following is a 131-amino-acid chain: Small ribosomal subunit protein uS12 (131 aa).

The interval 1–22 (MPTTQQLLRKGRKVLQKKSKVP) is disordered. Positions 9 to 20 (RKGRKVLQKKSK) are enriched in basic residues. The residue at position 89 (D89) is a 3-methylthioaspartic acid. Residues 102–131 (LDTQGVKDRNKSRSKYGTKKPKAGAAAAKK) are disordered. Residues 113-131 (SRSKYGTKKPKAGAAAAKK) show a composition bias toward basic residues.

This sequence belongs to the universal ribosomal protein uS12 family. As to quaternary structure, part of the 30S ribosomal subunit. Contacts proteins S8 and S17. May interact with IF1 in the 30S initiation complex.

Its function is as follows. With S4 and S5 plays an important role in translational accuracy. Interacts with and stabilizes bases of the 16S rRNA that are involved in tRNA selection in the A site and with the mRNA backbone. Located at the interface of the 30S and 50S subunits, it traverses the body of the 30S subunit contacting proteins on the other side and probably holding the rRNA structure together. The combined cluster of proteins S8, S12 and S17 appears to hold together the shoulder and platform of the 30S subunit. The sequence is that of Small ribosomal subunit protein uS12 from Deinococcus radiodurans (strain ATCC 13939 / DSM 20539 / JCM 16871 / CCUG 27074 / LMG 4051 / NBRC 15346 / NCIMB 9279 / VKM B-1422 / R1).